A 184-amino-acid chain; its full sequence is MATKLRKQPIRYDENPFIEGMVVPVKSQRVQLSRLGRDDNILVNQATGEMQGTHVTTYRRVDSEEFVKLFSTNIALTFELGAAGIKAFSVLVWILQDKGISKDLVPLDKFVLEDFLNAQEKKLALSQATFARGLAELEKAKIIAKHVRQGWYFINPNFVFNGDRVAFTTVIERKKTLQKQDESE.

The sequence is that of 20.9 kDa protein from Zymomonas mobilis subsp. mobilis (strain ATCC 10988 / DSM 424 / LMG 404 / NCIMB 8938 / NRRL B-806 / ZM1).